The sequence spans 849 residues: Leucine--tRNA ligase (849 aa).

Positions 44-54 (PYPSGRIHMGH) match the 'HIGH' region motif. The short motif at 620–624 (KMSKS) is the 'KMSKS' region element. Lys623 contacts ATP.

It belongs to the class-I aminoacyl-tRNA synthetase family.

Its subcellular location is the cytoplasm. It catalyses the reaction tRNA(Leu) + L-leucine + ATP = L-leucyl-tRNA(Leu) + AMP + diphosphate. The sequence is that of Leucine--tRNA ligase from Sphingopyxis alaskensis (strain DSM 13593 / LMG 18877 / RB2256) (Sphingomonas alaskensis).